A 215-amino-acid polypeptide reads, in one-letter code: Pyridoxine/pyridoxamine 5'-phosphate oxidase (215 aa).

Substrate-binding positions include 9-12 and Lys-69; that span reads RRDY. FMN-binding positions include 64–69, 79–80, Lys-86, and Gln-108; these read RILLLK and FT. Substrate is bound by residues Tyr-126, Arg-130, and Ser-134. FMN-binding positions include 143–144 and Trp-188; that span reads QS. 194 to 196 contacts substrate; sequence RLH. An FMN-binding site is contributed by Arg-198.

This sequence belongs to the pyridoxamine 5'-phosphate oxidase family. Homodimer. Requires FMN as cofactor.

The enzyme catalyses pyridoxamine 5'-phosphate + O2 + H2O = pyridoxal 5'-phosphate + H2O2 + NH4(+). It carries out the reaction pyridoxine 5'-phosphate + O2 = pyridoxal 5'-phosphate + H2O2. Its pathway is cofactor metabolism; pyridoxal 5'-phosphate salvage; pyridoxal 5'-phosphate from pyridoxamine 5'-phosphate: step 1/1. The protein operates within cofactor metabolism; pyridoxal 5'-phosphate salvage; pyridoxal 5'-phosphate from pyridoxine 5'-phosphate: step 1/1. Its function is as follows. Catalyzes the oxidation of either pyridoxine 5'-phosphate (PNP) or pyridoxamine 5'-phosphate (PMP) into pyridoxal 5'-phosphate (PLP). The protein is Pyridoxine/pyridoxamine 5'-phosphate oxidase of Pseudomonas fluorescens (strain ATCC BAA-477 / NRRL B-23932 / Pf-5).